Here is a 529-residue protein sequence, read N- to C-terminus: Heat shock protein 60 (529 aa).

The interval 460–484 (YQATVQHPPPQSSYEEDGRRPPTQP) is disordered.

The polypeptide is Heat shock protein 60 (Giardia intestinalis (Giardia lamblia)).